The primary structure comprises 131 residues: Metalloproteinase inhibitor (131 aa).

The first 29 residues, 1–29 (MVRKRALGLAGSALTLVLGAVGFTAPAQA), serve as a signal peptide directing secretion. 2 disulfides stabilise this stretch: cysteine 33-cysteine 39 and cysteine 93-cysteine 98.

In terms of biological role, inhibits microbial metallo-proteinases, such as thermolysin, but not serine, thiol, or carboxyl proteinases. The sequence is that of Metalloproteinase inhibitor (smpI) from Streptomyces nigrescens.